The following is a 263-amino-acid chain: MDVMNAFDSQAEDSPLSIGHSLRRRPLARKKLSEMVEEELEQMIRRHEFGEGEQLPSERELMAFFNVGRPSVREALAALKRKGLVQINNGERARVSRPSADTIISELSGMAKDFLSHPGGIAHFEQLRLFFESSLVRYAAEHATDEQIALLTKALEINSQSLDDNALFIRSDVEFHRVLAEIPGNPIFMAIHVALLDWLIAARPGVADRELHEHNNLSYQQHIAIVDAIRQRDPDKADRALQTHLNSVSATWHAFGKKNQKMR.

The HTH gntR-type domain occupies 30-98 (KKLSEMVEEE…NGERARVSRP (69 aa)). The H-T-H motif DNA-binding region spans 58 to 77 (ERELMAFFNVGRPSVREALA).

This sequence belongs to the NanR family.

Transcriptional repressor that controls expression of the genes required for the catabolism of sialic acids. In Salmonella bongori (strain ATCC 43975 / DSM 13772 / NCTC 12419), this protein is HTH-type transcriptional repressor NanR.